Consider the following 103-residue polypeptide: Large ribosomal subunit protein bL21 (103 aa).

The protein belongs to the bacterial ribosomal protein bL21 family. Part of the 50S ribosomal subunit. Contacts protein L20.

This protein binds to 23S rRNA in the presence of protein L20. The chain is Large ribosomal subunit protein bL21 from Shewanella frigidimarina (strain NCIMB 400).